The primary structure comprises 158 residues: uncharacterized protein (158 aa).

The HTH hxlR-type domain maps to 13–110; sequence ESVGRALELV…WGDEYLPRPE (98 aa).

This is an uncharacterized protein from Mycobacterium tuberculosis (strain CDC 1551 / Oshkosh).